We begin with the raw amino-acid sequence, 360 residues long: (+)-6a-hydroxymaackiain 3-O-methyltransferase 2 (360 aa).

S-adenosyl-L-methionine-binding positions include Val-202–Gly-205, Asp-226, Asp-226–Gln-227, Asp-246–Met-247, and Lys-260. His-264 acts as the Proton acceptor in catalysis.

It belongs to the class I-like SAM-binding methyltransferase superfamily. Cation-independent O-methyltransferase family. COMT subfamily.

The catalysed reaction is (+)-6a-hydroxymaackiain + S-adenosyl-L-methionine = (+)-pisatin + S-adenosyl-L-homocysteine + H(+). In terms of biological role, 3-O-methyltransferase involved in the phytoalexin pisatin biosynthesis. Can use (+)-6a-hydroxymaackiain, (+)-maackiain and with a lower activity (+)-medicarpin and 2,7,4'-trihydroxyisoflavanone as substrates, but not (-)-6a-hydroxymaackiain, daidzein, formononetin or isoliquiritigenin. This Pisum sativum (Garden pea) protein is (+)-6a-hydroxymaackiain 3-O-methyltransferase 2 (HMM2).